Here is a 467-residue protein sequence, read N- to C-terminus: MSDHNPLTLKLNLREKIAYGMGDVGSNLMLCIGTLYLLKFYTDELGMPAYYGGIIFLVAKFFTAFTDMLTGFLLDSRKNIGPKGKFRPFILYAAVPAALIATLQFIATTFCLPVKTTIATALFMMFGLSYSLMNCSYGAMIPAITKNPNERAQLAAYRQGGATIGLLICTVAFIPLQSLFSDSTVGYACAALMFSIGGFIFMMLCYRGVKEHYVDTTPTGHKASILKSFCAIFRNPPLLVLCIANLCTLAAFNIKLAIQVYYTQYVLNDINLLSWMGFFSMGCILIGVLLVPLTVKCFGKKQVYLAGMVLWAVGDILNYFWGSNSFTFVMFSCVAFFGTAFVNSLNWALVPDTVDYGEWKTGIRAEGSVYTGYTFFRKISAALAGFLPGIMLTQIGYVPNIAQSDATLQGLRQLIFIWPCALAIIAALTMGFFYTLNEKRFALIIEEINQRKNKEMATEEKTASVTL.

12 helical membrane passes run 17 to 37 (IAYG…TLYL), 54 to 74 (IIFL…GFLL), 88 to 108 (PFIL…FIAT), 121 to 141 (ALFM…GAMI), 160 to 180 (GGAT…QSLF), 185 to 205 (VGYA…MMLC), 238 to 258 (LLVL…KLAI), 275 to 295 (WMGF…PLTV), 303 to 323 (VYLA…FWGS), 325 to 345 (SFTF…VNSL), 379 to 399 (ISAA…GYVP), and 414 to 434 (LIFI…GFFY).

The protein belongs to the sodium:galactoside symporter (TC 2.A.2) family.

It is found in the cell inner membrane. Its function is as follows. Could be involved in sulfoquinovose import. The chain is Putative sulfoquinovose importer (yihO) from Escherichia coli (strain K12).